A 115-amino-acid chain; its full sequence is Large ribosomal subunit protein uL18 (115 aa).

This sequence belongs to the universal ribosomal protein uL18 family. As to quaternary structure, part of the 50S ribosomal subunit; part of the 5S rRNA/L5/L18/L25 subcomplex. Contacts the 5S and 23S rRNAs.

Functionally, this is one of the proteins that bind and probably mediate the attachment of the 5S RNA into the large ribosomal subunit, where it forms part of the central protuberance. The protein is Large ribosomal subunit protein uL18 of Rickettsia rickettsii (strain Iowa).